The chain runs to 372 residues: NAD(P)H-quinone oxidoreductase subunit 1 (372 aa).

Helical transmembrane passes span 27–47, 97–117, 128–148, 176–196, 204–224, 266–286, 308–328, and 347–367; these read IIWL…GVLV, ILFT…WLIV, VGIG…GLLM, LALS…IDIV, ILSW…ICAL, ILSA…PIPV, SIGI…AILL, and FLLP…LAFP.

This sequence belongs to the complex I subunit 1 family. NDH-1 is composed of at least 11 different subunits.

It is found in the cellular thylakoid membrane. It catalyses the reaction a plastoquinone + NADH + (n+1) H(+)(in) = a plastoquinol + NAD(+) + n H(+)(out). The enzyme catalyses a plastoquinone + NADPH + (n+1) H(+)(in) = a plastoquinol + NADP(+) + n H(+)(out). NDH-1 shuttles electrons from an unknown electron donor, via FMN and iron-sulfur (Fe-S) centers, to quinones in the respiratory and/or the photosynthetic chain. The immediate electron acceptor for the enzyme in this species is believed to be plastoquinone. Couples the redox reaction to proton translocation, and thus conserves the redox energy in a proton gradient. The protein is NAD(P)H-quinone oxidoreductase subunit 1 of Prochlorococcus marinus (strain MIT 9301).